A 316-amino-acid polypeptide reads, in one-letter code: MTTDELTKSLEAFTHFTRAEWAQLNDGHSAPLTEKERKNLEGIYETISEAEVNDVYMPLSELLYKRMVHNVRLHDDLNRFLKRERKRVPFVIGIAGSVAVGKSTTARLIQALASRWPGSPKVELVTTDGFLYPNEVLEKRGLMKRKGFPESYDIRSLLTFLTDLKAGTPVVKAPMYSHLTYNIEKDHIQTLIEPDVVIVEGINVLQVNRKGKRMPHVFVSDFFDFSIYVDAEEKDILSWYIERFQLLRNTAFQKPESYFHRYRDLTDEEAVAMAESIWHTINGVNLEKNIKPTRLRADLILTKGAHHRVEQVQLRK.

96–103 (GSVAVGKS) provides a ligand contact to ATP.

It belongs to the prokaryotic pantothenate kinase family.

The protein localises to the cytoplasm. It carries out the reaction (R)-pantothenate + ATP = (R)-4'-phosphopantothenate + ADP + H(+). It functions in the pathway cofactor biosynthesis; coenzyme A biosynthesis; CoA from (R)-pantothenate: step 1/5. The sequence is that of Pantothenate kinase from Shouchella clausii (strain KSM-K16) (Alkalihalobacillus clausii).